Here is a 530-residue protein sequence, read N- to C-terminus: Carbohydrate sulfotransferase 2 (530 aa).

Residues M1–K54 are Cytoplasmic-facing. Residues A55–D75 form a helical; Signal-anchor for type II membrane protein membrane-spanning segment. Residues Y76 to L530 lie on the Lumenal side of the membrane. Residues D89–R119 form a disordered region. W173–F179 contacts 3'-phosphoadenylyl sulfate. N243 carries N-linked (GlcNAc...) asparagine glycosylation. R332–S340 lines the 3'-phosphoadenylyl sulfate pocket. 2 N-linked (GlcNAc...) asparagine glycosylation sites follow: N457 and N475.

This sequence belongs to the sulfotransferase 1 family. Gal/GlcNAc/GalNAc subfamily. As to quaternary structure, homodimer; disulfide-linked. Homodimerization is not essential for enzyme activity. In terms of processing, glycosylation at Asn-475 is required for catalytic activity. In terms of tissue distribution, widely expressed. Highly expressed in bone marrow, peripheral blood leukocytes, spleen, brain, spinal cord, ovary and placenta. Expressed by high endothelial cells (HEVs) and leukocytes.

The protein localises to the golgi apparatus. It is found in the trans-Golgi network membrane. The catalysed reaction is 3-O-{N-acetyl-beta-D-glucosaminyl-(1-&gt;3)-beta-D-galactosyl-(1-&gt;3)-N-acetyl-alpha-D-galactosaminyl}-L-threonyl-[protein] + 3'-phosphoadenylyl sulfate = 3-O-{6-O-sulfo-N-acetyl-beta-D-glucosaminyl-(1-&gt;3)-beta-D-galactosyl-(1-&gt;3)-N-acetyl-alpha-D-galactosaminyl}-L-threonyl-[protein] + adenosine 3',5'-bisphosphate + H(+). It carries out the reaction 3-O-{N-acetyl-beta-D-glucosaminyl-(1-&gt;3)-beta-D-galactosyl-(1-&gt;3)-N-acetyl-alpha-D-galactosaminyl}-L-seryl-[protein] + 3'-phosphoadenylyl sulfate = 3-O-{6-O-sulfo-N-acetyl-beta-D-glucosaminyl-(1-&gt;3)-beta-D-galactosyl-(1-&gt;3)-N-acetyl-alpha-D-galactosaminyl}-L-seryl-[protein] + adenosine 3',5'-bisphosphate + H(+). The enzyme catalyses a 3-O-{beta-D-galactosyl-(1-&gt;3)-[N-acetyl-beta-D-glucosaminyl-(1-&gt;6)]-N-acetyl-alpha-D-galactosaminyl}-L-threonyl-[protein] + 3'-phosphoadenylyl sulfate = 3-O-{beta-D-galactosyl-(1-&gt;3)-[6-O-sulfo-N-acetyl-beta-D-glucosaminyl-(1-&gt;6)]-N-acetyl-alpha-D-galactosaminyl}-L-threonyl-[protein] + adenosine 3',5'-bisphosphate + H(+). It catalyses the reaction 3-O-{beta-D-galactosyl-(1-&gt;3)-[N-acetyl-beta-D-glucosaminyl-(1-&gt;6)]-N-acetyl-alpha-D-galactosaminyl}-L-seryl-[protein] + 3'-phosphoadenylyl sulfate = 3-O-{beta-D-galactosyl-(1-&gt;3)-[6-O-sulfo-N-acetyl-beta-D-glucosaminyl-(1-&gt;6)]-N-acetyl-alpha-D-galactosaminyl}-L-seryl-[protein] + adenosine 3',5'-bisphosphate + H(+). Its pathway is protein modification; carbohydrate sulfation. Its function is as follows. Sulfotransferase that utilizes 3'-phospho-5'-adenylyl sulfate (PAPS) as sulfonate donor to catalyze the transfer of sulfate to position 6 of non-reducing N-acetylglucosamine (GlcNAc) residues within keratan-like structures on N-linked glycans and within mucin-associated glycans that can ultimately serve as SELL ligands. SELL ligands are present in high endothelial cells (HEVs) and play a central role in lymphocyte homing at sites of inflammation. Participates in biosynthesis of the SELL ligand sialyl 6-sulfo Lewis X and in lymphocyte homing to Peyer patches. Has no activity toward O-linked sugars. Its substrate specificity may be influenced by its subcellular location. Sulfates GlcNAc residues at terminal, non-reducing ends of oligosaccharide chains. This is Carbohydrate sulfotransferase 2 (CHST2) from Homo sapiens (Human).